Consider the following 499-residue polypeptide: Thermostable carboxypeptidase 1 (499 aa).

The 494-residue stretch at 6-499 folds into the Peptidase M32 domain; the sequence is QNETIKQILA…FVRWVKEKYL (494 aa). The HPF signature appears at 238–240; that stretch reads HPF. The DXRXT motif lies at 248-252; that stretch reads DVRIT. Residue histidine 269 participates in Co(2+) binding. The HEXXH motif lies at 269-273; it reads HEFGH. Glutamate 270 functions as the Proton donor/acceptor in the catalytic mechanism. Residues histidine 273 and glutamate 299 each contribute to the Co(2+) site. The HES/GQ motif lies at 298–301; sequence HESQ. Residues 350-355 carry the I/NRXXA/SD motif; sequence IRTEAD. Residues 405-412 carry the GXXQDXHW motif; that stretch reads GILQDIHW.

Belongs to the peptidase M32 family. Homodimer. Co(2+) is required as a cofactor. Requires Mn(2+) as cofactor.

It catalyses the reaction Release of a C-terminal amino acid with broad specificity, except for -Pro.. EDTA and DTT reversibly abolish carboxypeptidase activity. In terms of biological role, broad specificity carboxypetidase that releases amino acids sequentially from the C-terminus, including neutral, aromatic, polar and basic residues, but not Pro, Gly, Asp and Glu. The sequence is that of Thermostable carboxypeptidase 1 from Pyrococcus furiosus (strain ATCC 43587 / DSM 3638 / JCM 8422 / Vc1).